Here is a 579-residue protein sequence, read N- to C-terminus: MSTASAASSSSSSSASEMIEAPSQVLNFEEIDYKEIEVEEVVGRGAFGVVCKAKWRAKDVAIKQIESESERKAFIVELRQLSRVNHPNIVKLYGACLNPVCLVMEYAEGGSLYNVLHGAEPLPYYTAAHAMSWCLQCSQGVAYLHSMQPKALIHRDLKPPNLLLVAGGTVLKICDFGTACDIQTHMTNNKGSAAWMAPEVFEGSNYSEKCDVFSWGIILWEVITRRKPFDEIGGPAFRIMWAVHNGTRPPLIKNLPKPIESLMTRCWSKDPSQRPSMEEIVKIMTHLMRYFPGADEPLQYPCQYSDEGQSNSATSTGSFMDIASTNTSNKSDTNMEQVPATNDTIKRLESKLLKNQAKQQSESGRLSLGASRGSSVESLPPTSEGKRMSADMSEIEARIVATAGNGQPRRRSIQDLTVTGTEPGQVSSRSSSPSVRMITTSGPTSEKPARSHPWTPDDSTDTNGSDNSIPMAYLTLDHQLQPLAPCPNSKESMAVFEQHCKMAQEYMKVQTEIALLLQRKQELVAELDQDEKDQQNTSRLVQEHKKLLDENKSLSTYYQQCKKQLEVIRSQQQKRQGTS.

Positions M1–Y300 are interaction with MAPK8IP1. Residues I36–F291 enclose the Protein kinase domain. Residues V42–V50 and K63 each bind ATP. K72 is covalently cross-linked (Glycyl lysine isopeptide (Lys-Gly) (interchain with G-Cter in ubiquitin)). D156 acts as the Proton acceptor in catalysis. K158 participates in a covalent cross-link: Glycyl lysine isopeptide (Lys-Gly) (interchain with G-Cter in ubiquitin). Phosphothreonine; by autocatalysis is present on residues T184 and T187. Position 192 is a phosphoserine; by autocatalysis (S192). Residue K209 forms a Glycyl lysine isopeptide (Lys-Gly) (interchain with G-Cter in ubiquitin) linkage. 2 disordered regions span residues P301–V338 and K354–D391. The span at D306 to V338 shows a compositional bias: polar residues. Low complexity predominate over residues S361–S375. 3 positions are modified to phosphoserine: S367, S389, and S412. The segment covering L416–Q425 has biased composition (polar residues). A disordered region spans residues L416–D466. Residues V426–R436 show a composition bias toward low complexity. S428 carries the post-translational modification Phosphoserine.

The protein belongs to the protein kinase superfamily. STE Ser/Thr protein kinase family. MAP kinase kinase kinase subfamily. As to quaternary structure, can form homodimer. Binds both upstream activators and downstream substrates in multimolecular complexes. Interacts with TAB1/MAP3K7IP1, TAB2/MAP3K7IP2 and TAB3/MAP3K7IP3. Identified in the TRIKA2 complex composed of MAP3K7/TAK1, TAB1/MAP3K7IP1 and TAB2/MAP3K7IP2. Interacts with PPM1L and PPM1B/PP2CB. Interaction with PP2A and PPP6C leads to its repressed activity. Interacts with TRAF6 and TAB1/MAP3K7IP1; during IL-1 signaling. Interacts with TAOK1 and TAOK2; interaction with TAOK2 interferes with MAP3K7 interaction with IKKA, thus preventing NF-kappa-B activation. Interacts with DYNC2I2 (via WD domains). Interacts with CYLD and RBCK1. Interacts with TGFBR1; induces MAP3K7/TAK1 activation by TRAF6. Interacts with MAPK8IP1 and SMAD6. Interacts with isoform 1 of VRK2. Interacts with DAB2; the interaction is induced by TGF-beta stimulation and may mediate TGF-beta stimulated JNK activation. Interacts with TRIM5. Part of a complex containing ITCH, NDFIP1 and MAP3K7. Interacts with PLEKHM1 (via N- and C-terminus). Interacts with TRIM8. Found in a complex with SH3RF1, RAC2, MAP2K7/MKK7, MAPK8IP1/JIP1, MAPK8/JNK1 and MAPK9/JNK2. Interacts with SASH1. Interacts with RIPK1. Mg(2+) is required as a cofactor. Post-translationally, association with TAB1/MAP3K7IP1 promotes autophosphorylation and subsequent activation. Association with TAB2/MAP3K7IP2, itself associated with free unanchored Lys-63 polyubiquitin chain, promotes autophosphorylation and subsequent activation of MAP3K7. Dephosphorylation at Thr-187 by PP2A and PPP6C leads to inactivation. 'Lys-48'-linked polyubiquitination at Lys-72 is induced by TNFalpha, and leads to proteasomal degradation. Undergoes 'Lys-48'-linked polyubiquitination catalyzed by ITCH. 'Lys-63'-linked polyubiquitination at Lys-158 by TRIM8 does not lead to proteasomal degradation but contributes to autophosphorylation and activation. Deubiquitinated by CYLD, a protease that selectively cleaves 'Lys-63'-linked ubiquitin chains.Deubiquitinated by USP19; leading to negative regulation of TNF-alpha- and IL-1beta-triggered NF-kappa-B activation.

Its subcellular location is the cytoplasm. It is found in the cell membrane. It carries out the reaction L-seryl-[protein] + ATP = O-phospho-L-seryl-[protein] + ADP + H(+). The catalysed reaction is L-threonyl-[protein] + ATP = O-phospho-L-threonyl-[protein] + ADP + H(+). With respect to regulation, activated by pro-inflammatory cytokines and in response to physical and chemical stresses, including osmotic stress, oxidative stress, arsenic and ultraviolet light irradiation. Activated by 'Lys-63'-linked polyubiquitination and by autophosphorylation. Association with TAB1/MAP3K7IP1 and TAB2/MAP3K7IP2 promotes activation through autophosphorylation, whereas PPM1B/PP2CB, PP2A and PPP6C dephosphorylation leads to inactivation. Ceramides are also able to activate MAP3K7/TAK1. Its function is as follows. Serine/threonine kinase which acts as an essential component of the MAP kinase signal transduction pathway. Plays an important role in the cascades of cellular responses evoked by changes in the environment. Mediates signal transduction of TRAF6, various cytokines including interleukin-1 (IL-1), transforming growth factor-beta (TGFB), TGFB-related factors like BMP2 and BMP4, toll-like receptors (TLR), tumor necrosis factor receptor CD40 and B-cell receptor (BCR). Once activated, acts as an upstream activator of the MKK/JNK signal transduction cascade and the p38 MAPK signal transduction cascade through the phosphorylation and activation of several MAP kinase kinases like MAP2K1/MEK1, MAP2K3/MKK3, MAP2K6/MKK6 and MAP2K7/MKK7. These MAP2Ks in turn activate p38 MAPKs and c-jun N-terminal kinases (JNKs); both p38 MAPK and JNK pathways control the transcription factors activator protein-1 (AP-1). Independently of MAP2Ks and p38 MAPKs, acts as a key activator of NF-kappa-B by promoting activation of the I-kappa-B-kinase (IKK) core complex. Mechanistically, recruited to polyubiquitin chains of RIPK2 and IKBKG/NEMO via TAB2/MAP3K7IP2 and TAB3/MAP3K7IP3, and catalyzes phosphorylation and activation of IKBKB/IKKB component of the IKK complex, leading to NF-kappa-B activation. In osmotic stress signaling, plays a major role in the activation of MAPK8/JNK1, but not that of NF-kappa-B. Promotes TRIM5 capsid-specific restriction activity. Phosphorylates RIPK1 at 'Ser-321' which positively regulates RIPK1 interaction with RIPK3 to promote necroptosis but negatively regulates RIPK1 kinase activity and its interaction with FADD to mediate apoptosis. Phosphorylates STING1 in response to cGAMP-activation, promoting association between STEEP1 and STING1 and STING1 translocation to COPII vesicles. In Mus musculus (Mouse), this protein is Mitogen-activated protein kinase kinase kinase 7 (Map3k7).